The sequence spans 618 residues: Protease 4 (618 aa).

At 1 to 24 (MRTLWRFIAGFFKWTWRVLNFVRE) the chain is on the cytoplasmic side. A helical transmembrane segment spans residues 25-45 (MVLNLFFIFLVLVGVGIWMQI). At 46-618 (GNGSNSEQTA…AFCLTCANVR (573 aa)) the chain is on the periplasmic side. Lys-209 (proton donor/acceptor) is an active-site residue. Catalysis depends on Ser-409, which acts as the Nucleophile.

It belongs to the peptidase S49 family. In terms of assembly, homotetramer.

Its subcellular location is the cell inner membrane. Functionally, digests cleaved signal peptides in vitro, its in vivo function is unknown. This activity is necessary to maintain proper secretion of mature proteins across the membrane. The chain is Protease 4 (sppA) from Salmonella typhi.